A 351-amino-acid polypeptide reads, in one-letter code: Cyclic AMP-dependent transcription factor ATF-4 (351 aa).

A Glycyl lysine isopeptide (Lys-Gly) (interchain with G-Cter in SUMO2) cross-link involves residue lysine 53. A disordered region spans residues 210 to 268 (EEDTPSDNDSGICMSPESYLGSPQHSPSTRGSPNRSLPSPGVLCGSARPKPYDPPGEKM). Threonine 213 is modified (phosphothreonine). Serine 215 is modified (phosphoserine; by CK2). Positions 215–224 (SDNDSGICMS) match the BetaTrCP degron motif motif. Residues serine 219, serine 224, serine 231, and serine 235 each carry the phosphoserine modification. Residues 230-246 (GSPQHSPSTRGSPNRSL) are compositionally biased toward polar residues. Proline 236 carries the post-translational modification 4-hydroxyproline. Serine 245 is modified (phosphoserine; by RPS6KA3). Position 248 is a phosphoserine (serine 248). Glycyl lysine isopeptide (Lys-Gly) (interchain with G-Cter in SUMO2) cross-links involve residues lysine 259, lysine 267, and lysine 272. Positions 278–341 (LDKKLKKMEQ…QYLKDLIEEV (64 aa)) constitute a bZIP domain. Positions 280–300 (KKLKKMEQNKTAATRYRQKKR) are basic motif. Residues 280–340 (KKLKKMEQNK…IQYLKDLIEE (61 aa)) are a coiled coil. The interaction with GABBR1 stretch occupies residues 305 to 341 (ALTGECKELEKKNEALKERADSLAKEIQYLKDLIEEV). The tract at residues 306–334 (LTGECKELEKKNEALKERADSLAKEIQYL) is leucine-zipper. Lysine 311 carries the N6-acetyllysine modification.

It belongs to the bZIP family. In terms of assembly, binds DNA as a homodimer and as a heterodimer. Heterodimer; heterodimerizes with CEBPB. Heterodimer; heterodimerizes with DDIT3/CHOP. Interacts with CEP290 (via an N-terminal region). Interacts with NEK6, DAPK2 (isoform 2) and ZIPK/DAPK3. Interacts (via its leucine zipper domain) with GABBR1 and GABBR2 (via their C-termini). Forms a heterodimer with TXLNG in osteoblasts. Interacts (via its DNA binding domain) with FOXO1 (C-terminal half); the interaction occurs in osteoblasts and regulates glucose homeostasis through suppression of beta-cell proliferation and a decrease in insulin production. Interacts with SATB2; the interaction results in enhanced DNA binding and transactivation by these transcription factors. Interacts with ABRAXAS2. Interacts with TRIB3, inhibiting the transactivation activity of ATF4. Interacts with DISC1; which inhibits ATF4 transcription factor activity by disrupting ATF4 dimerization and DNA-binding. Interacts with EP300/p300; EP300/p300 stabilizes ATF4 and increases its transcriptional activity independently of its catalytic activity by preventing its ubiquitination. Post-translationally, ubiquitinated by SCF(BTRC) in response to mTORC1 signal, followed by proteasomal degradation and leading to down-regulate expression of SIRT4. Interaction with EP300/p300 inhibits ubiquitination by SCF(BTRC). Phosphorylation at Ser-245 by RPS6KA3/RSK2 in osteoblasts enhances transactivation activity and promotes osteoblast differentiation. Phosphorylated on the betaTrCP degron motif at Ser-219, followed by phosphorylation at Thr-213, Ser-224, Ser-231, Ser-235 and Ser-248, promoting interaction with BTRC and ubiquitination. Phosphorylation is promoted by mTORC1. Phosphorylation at Ser-215 by CK2 decreases its stability. Phosphorylated by NEK6. In terms of processing, hydroxylated by PHD3, leading to decreased protein stability.

The protein resides in the nucleus. It localises to the nucleus speckle. It is found in the cytoplasm. Its subcellular location is the cell membrane. The protein localises to the cytoskeleton. The protein resides in the microtubule organizing center. It localises to the centrosome. In terms of biological role, transcription factor that binds the cAMP response element (CRE) (consensus: 5'-GTGACGT[AC][AG]-3') and displays two biological functions, as regulator of metabolic and redox processes under normal cellular conditions, and as master transcription factor during integrated stress response (ISR). Binds to asymmetric CRE's as a heterodimer and to palindromic CRE's as a homodimer. Core effector of the ISR, which is required for adaptation to various stress such as endoplasmic reticulum (ER) stress, amino acid starvation, mitochondrial stress or oxidative stress. During ISR, ATF4 translation is induced via an alternative ribosome translation re-initiation mechanism in response to EIF2S1/eIF-2-alpha phosphorylation, and stress-induced ATF4 acts as a master transcription factor of stress-responsive genes in order to promote cell recovery. Promotes the transcription of genes linked to amino acid sufficiency and resistance to oxidative stress to protect cells against metabolic consequences of ER oxidation. Activates the transcription of NLRP1, possibly in concert with other factors in response to ER stress. Activates the transcription of asparagine synthetase (ASNS) in response to amino acid deprivation or ER stress. However, when associated with DDIT3/CHOP, the transcriptional activation of the ASNS gene is inhibited in response to amino acid deprivation. Together with DDIT3/CHOP, mediates programmed cell death by promoting the expression of genes involved in cellular amino acid metabolic processes, mRNA translation and the terminal unfolded protein response (terminal UPR), a cellular response that elicits programmed cell death when ER stress is prolonged and unresolved. Activates the expression of COX7A2L/SCAF1 downstream of the EIF2AK3/PERK-mediated unfolded protein response, thereby promoting formation of respiratory chain supercomplexes and increasing mitochondrial oxidative phosphorylation. Together with DDIT3/CHOP, activates the transcription of the IRS-regulator TRIB3 and promotes ER stress-induced neuronal cell death by regulating the expression of BBC3/PUMA in response to ER stress. May cooperate with the UPR transcriptional regulator QRICH1 to regulate ER protein homeostasis which is critical for cell viability in response to ER stress. In the absence of stress, ATF4 translation is at low levels and it is required for normal metabolic processes such as embryonic lens formation, fetal liver hematopoiesis, bone development and synaptic plasticity. Acts as a regulator of osteoblast differentiation in response to phosphorylation by RPS6KA3/RSK2: phosphorylation in osteoblasts enhances transactivation activity and promotes expression of osteoblast-specific genes and post-transcriptionally regulates the synthesis of Type I collagen, the main constituent of the bone matrix. Cooperates with FOXO1 in osteoblasts to regulate glucose homeostasis through suppression of beta-cell production and decrease in insulin production. Activates transcription of SIRT4. Regulates the circadian expression of the core clock component PER2 and the serotonin transporter SLC6A4. Binds in a circadian time-dependent manner to the cAMP response elements (CRE) in the SLC6A4 and PER2 promoters and periodically activates the transcription of these genes. Mainly acts as a transcriptional activator in cellular stress adaptation, but it can also act as a transcriptional repressor: acts as a regulator of synaptic plasticity by repressing transcription, thereby inhibiting induction and maintenance of long-term memory. Regulates synaptic functions via interaction with DISC1 in neurons, which inhibits ATF4 transcription factor activity by disrupting ATF4 dimerization and DNA-binding. Its function is as follows. (Microbial infection) Binds to a Tax-responsive enhancer element in the long terminal repeat of HTLV-I. The polypeptide is Cyclic AMP-dependent transcription factor ATF-4 (Homo sapiens (Human)).